Reading from the N-terminus, the 180-residue chain is Negative modulator of initiation of replication (180 aa).

Positions Arg-115–Tyr-119 are interaction with DNA.

The protein belongs to the SeqA family. Homodimer. Polymerizes to form helical filaments.

It is found in the cytoplasm. Functionally, negative regulator of replication initiation, which contributes to regulation of DNA replication and ensures that replication initiation occurs exactly once per chromosome per cell cycle. Binds to pairs of hemimethylated GATC sequences in the oriC region, thus preventing assembly of replication proteins and re-initiation at newly replicated origins. Repression is relieved when the region becomes fully methylated. The polypeptide is Negative modulator of initiation of replication (Aliivibrio fischeri (strain ATCC 700601 / ES114) (Vibrio fischeri)).